The chain runs to 150 residues: MRNYDLSPLLRQWIGFDKLASSMQGSQEPIDFPPYNIEKKDDNHYRITLALAGFRQSDLDIEVEGPRLTVKGSPAPSEKAVEYLHQGLVFKPFTLSFTLAEHLHVSDAHFENGLLHIDLVRDVPEALQPQRIAIGGGRPALNQQSAEDAS.

Residues 26–137 (SQEPIDFPPY…QPQRIAIGGG (112 aa)) enclose the sHSP domain.

The protein belongs to the small heat shock protein (HSP20) family. As to quaternary structure, homodimer. Forms homomultimers of about 100-150 subunits at optimal growth temperatures. Conformation changes to oligomers at high temperatures or high ionic concentrations. The decrease in size of the multimers is accompanied by an increase in chaperone activity.

It localises to the cytoplasm. Its function is as follows. Associates with aggregated proteins, together with IbpA, to stabilize and protect them from irreversible denaturation and extensive proteolysis during heat shock and oxidative stress. Aggregated proteins bound to the IbpAB complex are more efficiently refolded and reactivated by the ATP-dependent chaperone systems ClpB and DnaK/DnaJ/GrpE. Its activity is ATP-independent. In Pectobacterium atrosepticum (strain SCRI 1043 / ATCC BAA-672) (Erwinia carotovora subsp. atroseptica), this protein is Small heat shock protein IbpB.